A 331-amino-acid polypeptide reads, in one-letter code: Ketol-acid reductoisomerase (NADP(+)) (331 aa).

Residues 2–182 form the KARI N-terminal Rossmann domain; it reads AKVYYDEDAN…GGTKGGVLET (181 aa). Residues 25 to 28, S51, S53, and 83 to 86 each bind NADP(+); these read YGSQ and DEKQ. H108 is an active-site residue. Residue G134 participates in NADP(+) binding. Residues 183–328 enclose the KARI C-terminal knotted domain; that stretch reads TFKDETETDL…VELRAMMPWL (146 aa). Positions 191, 195, 227, and 231 each coordinate Mg(2+). S252 lines the substrate pocket.

This sequence belongs to the ketol-acid reductoisomerase family. The cofactor is Mg(2+).

The enzyme catalyses (2R)-2,3-dihydroxy-3-methylbutanoate + NADP(+) = (2S)-2-acetolactate + NADPH + H(+). It carries out the reaction (2R,3R)-2,3-dihydroxy-3-methylpentanoate + NADP(+) = (S)-2-ethyl-2-hydroxy-3-oxobutanoate + NADPH + H(+). It functions in the pathway amino-acid biosynthesis; L-isoleucine biosynthesis; L-isoleucine from 2-oxobutanoate: step 2/4. It participates in amino-acid biosynthesis; L-valine biosynthesis; L-valine from pyruvate: step 2/4. Functionally, involved in the biosynthesis of branched-chain amino acids (BCAA). Catalyzes an alkyl-migration followed by a ketol-acid reduction of (S)-2-acetolactate (S2AL) to yield (R)-2,3-dihydroxy-isovalerate. In the isomerase reaction, S2AL is rearranged via a Mg-dependent methyl migration to produce 3-hydroxy-3-methyl-2-ketobutyrate (HMKB). In the reductase reaction, this 2-ketoacid undergoes a metal-dependent reduction by NADPH to yield (R)-2,3-dihydroxy-isovalerate. The sequence is that of Ketol-acid reductoisomerase (NADP(+)) from Clostridium novyi (strain NT).